The following is a 385-amino-acid chain: S-adenosylmethionine synthase (385 aa).

Histidine 16 contributes to the ATP binding site. Aspartate 18 contributes to the Mg(2+) binding site. Glutamate 44 contacts K(+). L-methionine contacts are provided by glutamate 57 and glutamine 100. The interval 100 to 110 (QSPDINQGVDR) is flexible loop. Residues 164-166 (DGK), 230-231 (KF), aspartate 239, 245-246 (RK), alanine 262, and lysine 266 contribute to the ATP site. Aspartate 239 contributes to the L-methionine binding site. Lysine 270 serves as a coordination point for L-methionine.

It belongs to the AdoMet synthase family. Homotetramer; dimer of dimers. The cofactor is Mg(2+). It depends on K(+) as a cofactor.

It is found in the cytoplasm. The enzyme catalyses L-methionine + ATP + H2O = S-adenosyl-L-methionine + phosphate + diphosphate. It functions in the pathway amino-acid biosynthesis; S-adenosyl-L-methionine biosynthesis; S-adenosyl-L-methionine from L-methionine: step 1/1. Catalyzes the formation of S-adenosylmethionine (AdoMet) from methionine and ATP. The overall synthetic reaction is composed of two sequential steps, AdoMet formation and the subsequent tripolyphosphate hydrolysis which occurs prior to release of AdoMet from the enzyme. In Helicobacter pylori (strain P12), this protein is S-adenosylmethionine synthase.